The chain runs to 345 residues: GTP 3',8-cyclase (345 aa).

The region spanning 10–236 (SHGRPLGVLR…QCVSSHWPLD (227 aa)) is the Radical SAM core domain. Arginine 19 is a binding site for GTP. Cysteine 26 and cysteine 30 together coordinate [4Fe-4S] cluster. S-adenosyl-L-methionine is bound at residue tyrosine 32. Cysteine 33 provides a ligand contact to [4Fe-4S] cluster. Position 65 (arginine 65) interacts with GTP. An S-adenosyl-L-methionine-binding site is contributed by glycine 69. GTP is bound at residue threonine 98. Residue serine 123 coordinates S-adenosyl-L-methionine. Lysine 172 is a GTP binding site. S-adenosyl-L-methionine is bound at residue methionine 206. Residues cysteine 269 and cysteine 272 each contribute to the [4Fe-4S] cluster site. A GTP-binding site is contributed by 274–276 (RIR). Cysteine 286 provides a ligand contact to [4Fe-4S] cluster.

It belongs to the radical SAM superfamily. MoaA family. As to quaternary structure, monomer and homodimer. Requires [4Fe-4S] cluster as cofactor.

The enzyme catalyses GTP + AH2 + S-adenosyl-L-methionine = (8S)-3',8-cyclo-7,8-dihydroguanosine 5'-triphosphate + 5'-deoxyadenosine + L-methionine + A + H(+). The protein operates within cofactor biosynthesis; molybdopterin biosynthesis. Functionally, catalyzes the cyclization of GTP to (8S)-3',8-cyclo-7,8-dihydroguanosine 5'-triphosphate. This chain is GTP 3',8-cyclase, found in Synechococcus sp. (strain CC9902).